The primary structure comprises 185 residues: MESTITIENVVASTALATEFDLVKIMDSGLEGAEYNKTKFPGLVYRIDNPKAAFLIFTSGKVVCTGAKTINNAHKAITNLANKLKDIGCDKINLEPEIHVQNIVASADLKTTLNLNTIAIAFGLENVEYEPEVFPGLIYRVEAPKVVVLVFSSGKLVITGGKCEEDCNGGLRIVRKEFDNLGLLC.

2 consecutive repeat copies span residues 7-84 (IENV…ANKL) and 100-178 (VQNI…RKEF).

Belongs to the TBP family.

Functionally, general factor that plays a role in the activation of archaeal genes transcribed by RNA polymerase. Binds specifically to the TATA box promoter element which lies close to the position of transcription initiation. The chain is TATA-box-binding protein 3 from Methanosarcina acetivorans (strain ATCC 35395 / DSM 2834 / JCM 12185 / C2A).